Here is a 468-residue protein sequence, read N- to C-terminus: Putative BTB/POZ domain and WD-repeat protein R154 (468 aa).

The 72-residue stretch at 14–85 (SDLQLIVEDS…FYGIDDKLPE (72 aa)) folds into the BTB domain. WD repeat units lie at residues 194-233 (HHSE…IIFN), 354-398 (DEIG…LVKS), and 401-440 (LFDV…IIYT).

It belongs to the mimivirus BTB/WD family.

The polypeptide is Putative BTB/POZ domain and WD-repeat protein R154 (Acanthamoeba polyphaga (Amoeba)).